The sequence spans 432 residues: Peptidase B (432 aa).

Mn(2+) is bound by residues Lys196 and Asp201. The active site involves Lys208. Residues Asp219, Asp278, and Glu280 each coordinate Mn(2+). Residue Arg282 is part of the active site.

Belongs to the peptidase M17 family. In terms of assembly, homohexamer. Requires Mn(2+) as cofactor.

Its subcellular location is the cytoplasm. The catalysed reaction is Release of an N-terminal amino acid, Xaa, from a peptide or arylamide. Xaa is preferably Glu or Asp but may be other amino acids, including Leu, Met, His, Cys and Gln.. In terms of biological role, probably plays an important role in intracellular peptide degradation. The polypeptide is Peptidase B (Yersinia pseudotuberculosis serotype IB (strain PB1/+)).